The chain runs to 137 residues: Protein MGF 110-7L (137 aa).

The N-terminal stretch at 1 to 20 (MLVIILGVIGLLASSNLVSS) is a signal peptide. Residues N69, N70, and N105 are each glycosylated (N-linked (GlcNAc...) asparagine; by host).

The protein belongs to the asfivirus MGF 110 family.

In terms of biological role, plays a role in virus cell tropism, and may be required for efficient virus replication in macrophages. The polypeptide is Protein MGF 110-7L (African swine fever virus (isolate Pig/Kenya/KEN-50/1950) (ASFV)).